The chain runs to 680 residues: Probable inactive DNA (cytosine-5)-methyltransferase DRM3 (680 aa).

The segment at 1–24 (MVKVEDDVEGSGINASVGDLRDAA) is disordered. A UBA 1 domain is found at 45-86 (SSSSHVRSQFIGMGFSPMLVDRVLQKHGDRDSDTILEALLSQ). Positions 91-113 (KSGSESGSLGDLFDSDNEENSSH) are disordered. Positions 194 to 235 (SLFGVMDKTLHLLQMGFTEEEVSSVIDKAGPEATVLELADTI) constitute a UBA 2 domain. In terms of domain architecture, SAM-dependent MTase DRM-type spans 336 to 663 (IRRNVRSDVA…QRVKHIMGRL (328 aa)).

Belongs to the class I-like SAM-binding methyltransferase superfamily. DRM-methyltransferase family.

The protein localises to the nucleus. In terms of biological role, involved in de novo DNA methylation. Involved in RNA-directed DNA methylation (RdDM). This chain is Probable inactive DNA (cytosine-5)-methyltransferase DRM3, found in Oryza sativa subsp. japonica (Rice).